A 677-amino-acid polypeptide reads, in one-letter code: MDDMMRAMDCLNMAATLRNAALASATCTGRTLGEDREPIWVEGSRKTPEPPLPEESPAPEPNNEIPLLPKIDFEPNISCFPDLQAINASIVRRELEEEGKRCVRQQLKAIRDKQDAMRLSRETQQRKEERQRDQLQQKALRERNESLLIQKADQMTAAQLEAQQREQLALRQQIDQKLHKLALEGVSRCQRRFNQKYEGIAKILLSLNPETVKVCAAQNTQLKELGQKFEQLVSSVKMGNCEMQSQFLCSIIKAEEFCKSLDALELDIIKQLAEFSEQIQQQLKMEAAKKLEDERQRQQQQEEERQKLEEQQKLEEQEKLRKEKEESAAKEKQQEAETAKADAANVPAPLEPKSQDVPPAATATSTSVHPDRLKFYNDILALYQSKVDAVKPLQTEESLKQYRTGCQRAINLPLNAISAVSPQHLAQNFDKLYSFFAGQPTKVMNGTITINDHPLARDYCMLLMAKKFVSQTETAICSNPQAAFPFASVIITFWKLLPDFGKVFLAYMYKESPFLVPYVIPQQQGQTPEQYLKTIGYRLTDKNELEKPDIYLKRQTGLARLYAAVIISQGRKAAGPDECFELNEGWLWLAHMVHVKPLPDISATLIMEILQTLGFELWRTYGKQFVKLLVYIQNIYMPQLAAYDEGGPKTRLEMLLAKFLRERQIAQAVGVLPPGFW.

Residues 34 to 48 (EDREPIWVEGSRKTP) show a composition bias toward basic and acidic residues. Disordered stretches follow at residues 34–65 (EDRE…NNEI), 113–136 (KQDA…DQLQ), and 294–366 (ERQR…ATST). Residues 49–60 (EPPLPEESPAPE) are compositionally biased toward pro residues. Coiled-coil stretches lie at residues 122 to 179 (ETQQ…QKLH) and 280 to 346 (QQQL…AANV). The segment covering 294–340 (ERQRQQQQEEERQKLEEQQKLEEQEKLRKEKEESAAKEKQQEAETAK) has biased composition (basic and acidic residues).

It belongs to the GLE1 family. As to quaternary structure, may associate with the NPC.

The protein localises to the cytoplasm. The protein resides in the nucleus. It localises to the nuclear pore complex. In terms of biological role, required for the export of mRNAs containing poly(A) tails from the nucleus into the cytoplasm. May be involved in the terminal step of the mRNA transport through the nuclear pore complex (NPC). In Drosophila melanogaster (Fruit fly), this protein is mRNA export factor Gle1.